Reading from the N-terminus, the 78-residue chain is Translational regulator CsrA (78 aa).

This sequence belongs to the CsrA/RsmA family. In terms of assembly, homodimer; the beta-strands of each monomer intercalate to form a hydrophobic core, while the alpha-helices form wings that extend away from the core.

It is found in the cytoplasm. Its function is as follows. A translational regulator that binds mRNA to regulate translation initiation and/or mRNA stability. Usually binds in the 5'-UTR at or near the Shine-Dalgarno sequence preventing ribosome-binding, thus repressing translation. Its main target seems to be the major flagellin gene, while its function is anatagonized by FliW. This is Translational regulator CsrA from Desulfovibrio desulfuricans (strain ATCC 27774 / DSM 6949 / MB).